Reading from the N-terminus, the 118-residue chain is Fluoride-specific ion channel FluC 2 (118 aa).

4 consecutive transmembrane segments (helical) span residues 1 to 21 (MIEA…RFAI), 33 to 53 (FPIA…YIIG), 55 to 75 (GVTT…FTTF), and 93 to 113 (TFLL…FLGM). Glycine 70 and threonine 73 together coordinate Na(+).

It belongs to the fluoride channel Fluc/FEX (TC 1.A.43) family.

The protein resides in the cell membrane. The catalysed reaction is fluoride(in) = fluoride(out). With respect to regulation, na(+) is not transported, but it plays an essential structural role and its presence is essential for fluoride channel function. In terms of biological role, fluoride-specific ion channel. Important for reducing fluoride concentration in the cell, thus reducing its toxicity. This Bacillus thuringiensis subsp. konkukian (strain 97-27) protein is Fluoride-specific ion channel FluC 2.